Consider the following 590-residue polypeptide: CTP synthase (590 aa).

The interval 1 to 281 (MPALRKHPQT…DAYVVRRLNL (281 aa)) is amidoligase domain. Serine 23 contacts CTP. Residue serine 23 participates in UTP binding. Residues 24–29 (SLGKGL) and aspartate 81 contribute to the ATP site. Mg(2+)-binding residues include aspartate 81 and glutamate 155. CTP-binding positions include 162 to 164 (DIE), 202 to 207 (KTKPTQ), and lysine 238. UTP is bound by residues 202 to 207 (KTKPTQ) and lysine 238. Residues 306 to 554 (RIALVGKYID…IGAAIDYKAA (249 aa)) enclose the Glutamine amidotransferase type-1 domain. Glycine 369 serves as a coordination point for L-glutamine. The Nucleophile; for glutamine hydrolysis role is filled by cysteine 396. Residues 397-400 (LGLQ), glutamate 419, and arginine 480 each bind L-glutamine. Active-site residues include histidine 527 and glutamate 529.

This sequence belongs to the CTP synthase family. In terms of assembly, homotetramer.

The catalysed reaction is UTP + L-glutamine + ATP + H2O = CTP + L-glutamate + ADP + phosphate + 2 H(+). It carries out the reaction L-glutamine + H2O = L-glutamate + NH4(+). The enzyme catalyses UTP + NH4(+) + ATP = CTP + ADP + phosphate + 2 H(+). Its pathway is pyrimidine metabolism; CTP biosynthesis via de novo pathway; CTP from UDP: step 2/2. Allosterically activated by GTP, when glutamine is the substrate; GTP has no effect on the reaction when ammonia is the substrate. The allosteric effector GTP functions by stabilizing the protein conformation that binds the tetrahedral intermediate(s) formed during glutamine hydrolysis. Inhibited by the product CTP, via allosteric rather than competitive inhibition. In terms of biological role, catalyzes the ATP-dependent amination of UTP to CTP with either L-glutamine or ammonia as the source of nitrogen. Regulates intracellular CTP levels through interactions with the four ribonucleotide triphosphates. This chain is CTP synthase, found in Mycolicibacterium smegmatis (strain ATCC 700084 / mc(2)155) (Mycobacterium smegmatis).